Consider the following 285-residue polypeptide: uncharacterized protein (285 aa).

The chain crosses the membrane as a helical span at residues 197–217 (PTIGALLSLVSAFFSFIPFLM).

Its subcellular location is the membrane. This is an uncharacterized protein from Saccharomyces cerevisiae (strain ATCC 204508 / S288c) (Baker's yeast).